A 142-amino-acid polypeptide reads, in one-letter code: Ribosome-binding factor A (142 aa).

Residues 119 to 142 form a disordered region; it reads ETLGEVQSESDQPTTDETTTVNKT. The span at 123 to 142 shows a compositional bias: polar residues; the sequence is EVQSESDQPTTDETTTVNKT.

It belongs to the RbfA family. In terms of assembly, monomer. Binds 30S ribosomal subunits, but not 50S ribosomal subunits or 70S ribosomes.

It localises to the cytoplasm. Its function is as follows. One of several proteins that assist in the late maturation steps of the functional core of the 30S ribosomal subunit. Associates with free 30S ribosomal subunits (but not with 30S subunits that are part of 70S ribosomes or polysomes). Required for efficient processing of 16S rRNA. May interact with the 5'-terminal helix region of 16S rRNA. This chain is Ribosome-binding factor A, found in Prochlorococcus marinus (strain MIT 9303).